Consider the following 288-residue polypeptide: MSQISAKDVKDLRDITGVGMMDCKKALEESAGDMQKAIEYLRKKGAALAAKRAEKEAREGMVAIRLSEDRKAGVILELNCETDFVARGAVFTGFAGALTSLALDNAAASPEELLALSLGEEYGNEKVDDAMKTMTGRLGEKLELKRLALFLAPDGVVESYVHPGAQLGSLVQLATDKPEEAGVLARDIAMQVAAASPIVADRSAVPADYIEKEREIYRQQALGQGKPEQFVEKIVTGRLEKYYQEVVLTEQSFIKDGNIKVSDVLSDFRKKHQAQVDVKGFVRYQLGE.

The segment at 82–85 (TDFV) is involved in Mg(2+) ion dislocation from EF-Tu.

The protein belongs to the EF-Ts family.

It localises to the cytoplasm. In terms of biological role, associates with the EF-Tu.GDP complex and induces the exchange of GDP to GTP. It remains bound to the aminoacyl-tRNA.EF-Tu.GTP complex up to the GTP hydrolysis stage on the ribosome. The polypeptide is Elongation factor Ts (Chlorobium limicola (strain DSM 245 / NBRC 103803 / 6330)).